Reading from the N-terminus, the 679-residue chain is Single-strand DNA endonuclease ASTE1 (679 aa).

The segment at 351–400 (TILPTQVENMQQPNAHRISQPIRQIIYGLLLNASPHLDKTSWNALPPQPL) is interaction with SHLD2. Positions 625 to 645 (RSNSKKKRQKKQNTSCSKNRG) are disordered. Over residues 626–635 (SNSKKKRQKK) the composition is skewed to basic residues.

It belongs to the asteroid family. In terms of assembly, interacts with SHLD1, SHLD2, SHLD3, RIF1 and MAD2L2/REV7.

Functionally, structure-specific DNA endonuclease that specifically cleaves single-stranded DNA and 3' overhang DNA. Contributes to the control of DNA double-strand break repair choice by antagonizing BRCA1-dependent homologous recombination (HR) and promoting non-homologous end-joining (NHEJ). Recruited to the single-stranded DNA ends by SHLD2 and cleaves the 3' exposed DNA ends, therefore inhibiting DNA end resection (necessary for HR) and promoting DNA end protection (necessary for NHEJ). This Pongo abelii (Sumatran orangutan) protein is Single-strand DNA endonuclease ASTE1 (ASTE1).